A 291-amino-acid chain; its full sequence is 5'-3' exonuclease (291 aa).

The region spanning A176–K269 is the 5'-3' exonuclease domain.

In terms of biological role, 5'-3' exonuclease acting preferentially on double-stranded DNA. This is 5'-3' exonuclease (polA) from Mycoplasma genitalium (strain ATCC 33530 / DSM 19775 / NCTC 10195 / G37) (Mycoplasmoides genitalium).